A 597-amino-acid chain; its full sequence is Nuclear factor erythroid 2-related factor 2 (597 aa).

Residues 29-31 (DLG) carry the DLG motif motif. Ser-40 carries the phosphoserine; by PKC modification. The ETGE motif motif lies at 79–82 (ETGE). Ser-207 bears the Phosphoserine mark. Residues 327-440 (TMEFNDSDSG…APFTKDKHSS (114 aa)) are disordered. Polar residues predominate over residues 333-345 (SDSGISLNTSPSR). Residues Lys-454, Lys-464, and Lys-479 are each glycosylated (N-linked (Glc) (glycation) lysine). Residues 489–552 (LIRDIRRRGK…HLLKRRLSTL (64 aa)) enclose the bZIP domain. Arg-491 carries an N-linked (Glc) (glycation) arginine glycan. The tract at residues 491–510 (RDIRRRGKNKVAAQNCRKRK) is basic motif. The tract at residues 514-521 (IVELEQDL) is leucine-zipper. Arg-561 carries N-linked (Glc) (glycation) arginine glycosylation. Residues 563–597 (EDGKPYSPSEYSLQQTRDGNVFLVPKSKKPDTKKN) form a disordered region. An N-linked (Glc) (glycation) lysine glycan is attached at Lys-566. A compositionally biased stretch (polar residues) spans 571–580 (SEYSLQQTRD). A mediates interaction with CHD6 and is necessary to activate transcription region spans residues 583–588 (VFLVPK). Residues Lys-588 and Lys-591 each carry the N6-acetyllysine; by CREBBP modification.

This sequence belongs to the bZIP family. CNC subfamily. As to quaternary structure, heterodimer; heterodimerizes with small Maf proteins. Interacts (via the bZIP domain) with MAFG and MAFK; required for binding to antioxidant response elements (AREs) on DNA. Interacts with KEAP1; the interaction is direct and promotes ubiquitination by the BCR(KEAP1) E3 ubiquitin ligase complex. Forms a ternary complex with PGAM5 and KEAP1. Interacts with EEF1D at heat shock promoter elements (HSE). Interacts via its leucine-zipper domain with the coiled-coil domain of PMF1. Interacts with CHD6; involved in activation of the transcription. Interacts with ESRRB; represses NFE2L2 transcriptional activity. Interacts with MOTS-c, a peptide produced by the mitochondrially encoded 12S rRNA MT-RNR1; the interaction occurs in the nucleus following metabolic stress. Ubiquitinated in the cytoplasm by the BCR(KEAP1) E3 ubiquitin ligase complex leading to its degradation. In response to oxidative stress, electrophile metabolites, such as sulforaphane, modify KEAP1, leading to inhibit activity of the BCR(KEAP1) complex, promoting NFE2L2/NRF2 nuclear accumulation and activity. In response to autophagy, the BCR(KEAP1) complex is inactivated. Post-translationally, phosphorylated by EIF2AK3/PERK following unfolded protein response (UPR), promoting dissociation from its cytoplasmic inhibitor KEAP1, followed by its translocation into the nucleus. Phosphorylation of Ser-40 by PKC in response to oxidative stress dissociates NFE2L2 from its cytoplasmic inhibitor KEAP1, promoting its translocation into the nucleus. In terms of processing, acetylation at Lys-588 and Lys-591 increases nuclear localization whereas deacetylation by SIRT1 enhances cytoplasmic presence. Glycation impairs transcription factor activity by preventing heterodimerization with small Maf proteins. Deglycation by FN3K restores activity. As to expression, widely expressed. Highest expression in liver, skeletal muscle, luminal cells of the stomach and intestine, lining of the bronchi and alveoli, and in renal tubules; followed by heart, spleen, testis and brain.

Its subcellular location is the cytoplasm. The protein resides in the cytosol. The protein localises to the nucleus. Its function is as follows. Transcription factor that plays a key role in the response to oxidative stress: binds to antioxidant response (ARE) elements present in the promoter region of many cytoprotective genes, such as phase 2 detoxifying enzymes, and promotes their expression, thereby neutralizing reactive electrophiles. In normal conditions, ubiquitinated and degraded in the cytoplasm by the BCR(KEAP1) complex. In response to oxidative stress, electrophile metabolites inhibit activity of the BCR(KEAP1) complex, promoting nuclear accumulation of NFE2L2/NRF2, heterodimerization with one of the small Maf proteins and binding to ARE elements of cytoprotective target genes. The NFE2L2/NRF2 pathway is also activated in response to selective autophagy: autophagy promotes interaction between KEAP1 and SQSTM1/p62 and subsequent inactivation of the BCR(KEAP1) complex, leading to NFE2L2/NRF2 nuclear accumulation and expression of cytoprotective genes. The NFE2L2/NRF2 pathway is also activated during the unfolded protein response (UPR), contributing to redox homeostasis and cell survival following endoplasmic reticulum stress. May also be involved in the transcriptional activation of genes of the beta-globin cluster by mediating enhancer activity of hypersensitive site 2 of the beta-globin locus control region. Also plays an important role in the regulation of the innate immune response. It is a critical regulator of the innate immune response and survival during sepsis by maintaining redox homeostasis and restraint of the dysregulation of pro-inflammatory signaling pathways like MyD88-dependent and -independent and TNF-alpha signaling. Suppresses macrophage inflammatory response by blocking pro-inflammatory cytokine transcription and the induction of IL6. Binds to the proximity of pro-inflammatory genes in macrophages and inhibits RNA Pol II recruitment. The inhibition is independent of the Nrf2-binding motif and reactive oxygen species level. Represses antiviral cytosolic DNA sensing by suppressing the expression of the adapter protein STING1 and decreasing responsiveness to STING1 agonists while increasing susceptibility to infection with DNA viruses. The protein is Nuclear factor erythroid 2-related factor 2 of Mus musculus (Mouse).